The sequence spans 429 residues: Transcription factor IIIA (429 aa).

The interval 1–45 (MGGEVLNNEGMPLAELKQETIPISRSESSESLNSLTSTRSSSSNR) is disordered. A compositionally biased stretch (low complexity) spans 24-44 (SRSESSESLNSLTSTRSSSSN). 9 C2H2-type zinc fingers span residues 49 to 74 (YFCD…LSVH), 80 to 102 (FQCD…LYTH), 108 to 130 (FQCS…EVTH), 134 to 159 (FICP…LSVH), 163 to 186 (LTCP…SKHH), 194 to 219 (YQCT…KNDH), 222 to 244 (LKCP…MIIH), 253 to 277 (WKCH…GSIH), and 365 to 389 (YRCF…IDKH). A compositionally biased stretch (basic and acidic residues) spans 406-416 (KTLVDQNHKEP). The interval 406 to 429 (KTLVDQNHKEPFIIQKETQSAGDK) is disordered.

Its subcellular location is the nucleus. Its function is as follows. Interacts with the internal control region (ICR) of approximately 50 bases within the 5S RNA genes, is required for correct transcription of these genes by RNA polymerase III. Also binds the transcribed 5S RNA's. This Saccharomyces cerevisiae (strain ATCC 204508 / S288c) (Baker's yeast) protein is Transcription factor IIIA (PZF1).